Consider the following 598-residue polypeptide: NADH-quinone oxidoreductase subunit C/D (598 aa).

The interval 1–189 (MTDSTTHDRE…DPFELTRQKQ (189 aa)) is NADH dehydrogenase I subunit C. The interval 213–598 (DFMFLNLGPN…IDFVMSDVDR (386 aa)) is NADH dehydrogenase I subunit D.

It in the N-terminal section; belongs to the complex I 30 kDa subunit family. This sequence in the C-terminal section; belongs to the complex I 49 kDa subunit family. In terms of assembly, NDH-1 is composed of 13 different subunits. Subunits NuoB, CD, E, F, and G constitute the peripheral sector of the complex.

It localises to the cell inner membrane. The enzyme catalyses a quinone + NADH + 5 H(+)(in) = a quinol + NAD(+) + 4 H(+)(out). Functionally, NDH-1 shuttles electrons from NADH, via FMN and iron-sulfur (Fe-S) centers, to quinones in the respiratory chain. The immediate electron acceptor for the enzyme in this species is believed to be ubiquinone. Couples the redox reaction to proton translocation (for every two electrons transferred, four hydrogen ions are translocated across the cytoplasmic membrane), and thus conserves the redox energy in a proton gradient. The sequence is that of NADH-quinone oxidoreductase subunit C/D from Edwardsiella ictaluri (strain 93-146).